Reading from the N-terminus, the 1598-residue chain is Serine/threonine-protein kinase Nek1 (1598 aa).

Residues 106-380 enclose the Protein kinase domain; the sequence is YEVIRQIGAG…ALQCLGYTIF (275 aa). ATP contacts are provided by residues 112 to 120 and Lys-135; that span reads IGAGRFGEV. The active-site Proton acceptor is Asp-240.

This sequence belongs to the protein kinase superfamily. NEK Ser/Thr protein kinase family. NIMA subfamily.

It localises to the cytoplasm. It is found in the cytoskeleton. The protein resides in the microtubule organizing center. Its subcellular location is the centrosome. The protein localises to the spindle pole. The enzyme catalyses L-seryl-[protein] + ATP = O-phospho-L-seryl-[protein] + ADP + H(+). It catalyses the reaction L-threonyl-[protein] + ATP = O-phospho-L-threonyl-[protein] + ADP + H(+). Phosphorylation status of the T-loop (amino acids 267-293) modulates kinase activity and subcellular localization of the protein. Functionally, probable serine/threonine-protein kinase. Involved in controlling centrosome splitting. Promotes separation of the centrosome outer cores. The chain is Serine/threonine-protein kinase Nek1 from Toxoplasma gondii (strain ATCC 50611 / Me49).